The primary structure comprises 365 residues: Protein RecA (365 aa).

73–80 (GPESSGKT) serves as a coordination point for ATP.

This sequence belongs to the RecA family.

The protein resides in the cytoplasm. Functionally, can catalyze the hydrolysis of ATP in the presence of single-stranded DNA, the ATP-dependent uptake of single-stranded DNA by duplex DNA, and the ATP-dependent hybridization of homologous single-stranded DNAs. It interacts with LexA causing its activation and leading to its autocatalytic cleavage. The polypeptide is Protein RecA (Prochlorococcus marinus (strain AS9601)).